The primary structure comprises 514 residues: 2,3-bisphosphoglycerate-independent phosphoglycerate mutase (514 aa).

Residues Asp-14 and Ser-64 each contribute to the Mn(2+) site. Ser-64 (phosphoserine intermediate) is an active-site residue. Substrate is bound by residues His-125, 155–156 (RD), Arg-187, Arg-193, 263–266 (RADR), and Lys-336. The Mn(2+) site is built by Asp-403, His-407, Asp-444, His-445, and His-463.

This sequence belongs to the BPG-independent phosphoglycerate mutase family. As to quaternary structure, monomer. The cofactor is Mn(2+).

It carries out the reaction (2R)-2-phosphoglycerate = (2R)-3-phosphoglycerate. It functions in the pathway carbohydrate degradation; glycolysis; pyruvate from D-glyceraldehyde 3-phosphate: step 3/5. In terms of biological role, catalyzes the interconversion of 2-phosphoglycerate and 3-phosphoglycerate. This Shewanella sp. (strain MR-4) protein is 2,3-bisphosphoglycerate-independent phosphoglycerate mutase.